The sequence spans 338 residues: Ketol-acid reductoisomerase (NADP(+)) (338 aa).

Residues 1–181 (MKVFYDKDAD…GGGRAGIIET (181 aa)) enclose the KARI N-terminal Rossmann domain. Residues 24-27 (YGSQ), arginine 47, and serine 52 contribute to the NADP(+) site. Residue histidine 107 is part of the active site. Position 133 (glycine 133) interacts with NADP(+). The KARI C-terminal knotted domain occupies 182–327 (NFREETETDL…SKLRAMMPWI (146 aa)). Positions 190, 194, 226, and 230 each coordinate Mg(2+). Serine 251 lines the substrate pocket.

It belongs to the ketol-acid reductoisomerase family. Mg(2+) serves as cofactor.

The enzyme catalyses (2R)-2,3-dihydroxy-3-methylbutanoate + NADP(+) = (2S)-2-acetolactate + NADPH + H(+). The catalysed reaction is (2R,3R)-2,3-dihydroxy-3-methylpentanoate + NADP(+) = (S)-2-ethyl-2-hydroxy-3-oxobutanoate + NADPH + H(+). The protein operates within amino-acid biosynthesis; L-isoleucine biosynthesis; L-isoleucine from 2-oxobutanoate: step 2/4. Its pathway is amino-acid biosynthesis; L-valine biosynthesis; L-valine from pyruvate: step 2/4. Functionally, involved in the biosynthesis of branched-chain amino acids (BCAA). Catalyzes an alkyl-migration followed by a ketol-acid reduction of (S)-2-acetolactate (S2AL) to yield (R)-2,3-dihydroxy-isovalerate. In the isomerase reaction, S2AL is rearranged via a Mg-dependent methyl migration to produce 3-hydroxy-3-methyl-2-ketobutyrate (HMKB). In the reductase reaction, this 2-ketoacid undergoes a metal-dependent reduction by NADPH to yield (R)-2,3-dihydroxy-isovalerate. This Paraburkholderia xenovorans (strain LB400) protein is Ketol-acid reductoisomerase (NADP(+)).